The primary structure comprises 131 residues: D-ribose pyranase (131 aa).

Residue H20 is the Proton donor of the active site. Substrate-binding positions include D28, H98, and 120–122 (YAN).

Belongs to the RbsD / FucU family. RbsD subfamily. As to quaternary structure, homodecamer.

Its subcellular location is the cytoplasm. It carries out the reaction beta-D-ribopyranose = beta-D-ribofuranose. It functions in the pathway carbohydrate metabolism; D-ribose degradation; D-ribose 5-phosphate from beta-D-ribopyranose: step 1/2. Functionally, catalyzes the interconversion of beta-pyran and beta-furan forms of D-ribose. In Laribacter hongkongensis (strain HLHK9), this protein is D-ribose pyranase.